We begin with the raw amino-acid sequence, 198 residues long: Segregation and condensation protein B (198 aa).

Residues 167 to 198 (PKLADPEAEDPDQSEMDLFFDRFNQSKEQEEE) are disordered. Residues 172 to 181 (PEAEDPDQSE) are compositionally biased toward acidic residues.

This sequence belongs to the ScpB family. As to quaternary structure, homodimer. Homodimerization may be required to stabilize the binding of ScpA to the Smc head domains. Component of a cohesin-like complex composed of ScpA, ScpB and the Smc homodimer, in which ScpA and ScpB bind to the head domain of Smc. The presence of the three proteins is required for the association of the complex with DNA.

It localises to the cytoplasm. Its function is as follows. Participates in chromosomal partition during cell division. May act via the formation of a condensin-like complex containing Smc and ScpA that pull DNA away from mid-cell into both cell halves. This Listeria innocua serovar 6a (strain ATCC BAA-680 / CLIP 11262) protein is Segregation and condensation protein B.